The following is a 768-amino-acid chain: Cullin-3-A (768 aa).

The disordered stretch occupies residues valine 677–aspartate 698. Positions glycine 682 to aspartate 698 are enriched in basic and acidic residues. A Cullin neddylation domain is found at aspartate 698–aspartate 760. Lysine 712 participates in a covalent cross-link: Glycyl lysine isopeptide (Lys-Gly) (interchain with G-Cter in NEDD8).

It belongs to the cullin family. As to quaternary structure, component of multiple BCR (BTB-CUL3-RBX1) E3 ubiquitin-protein ligase complexes formed of cul3, rbx1 and a variable BTB domain-containing protein acting as both, adapter to cullin and substrate recognition subunit. Interacts with btbd6. Neddylated. Attachment of NEDD8 is required for the E3 ubiquitin-protein ligase activity of the SCF-like complex.

It localises to the nucleus. The protein operates within protein modification; protein ubiquitination. Functionally, probable core component of cullin-based SCF-like E3 ubiquitin-protein ligase complexes which mediate the ubiquitination and subsequent proteasomal degradation of target proteins. The E3 ubiquitin-protein ligase activity of the complex is dependent on the neddylation of the cullin subunit. Involved in ER-Golgi transport by regulating the size of COPII coats, thereby playing a key role in collagen export, which is required for embryonic stem (ES) cells division. May play a role in the regulation of mittotic entry via ubiquitination of aurka. The polypeptide is Cullin-3-A (cul3a) (Xenopus laevis (African clawed frog)).